The primary structure comprises 578 residues: MDVCSKNSNRTAPVSEGGIRRADVPLCSRTNGWSWPPHPFQFLAWLLYLYFAVTGFGVFVPLLPTHWIPAGYICTGITFVCHLFMHLMAVSIDPADYNVRAKSYKGPMPVFDRTKHAHVIENCHCYLCEVDVGPKSKHCSACNKCVASFDHHCRWLNNCVGSRNYWLFLNSVISALLGIVLVVVIASYVFIEFFLDPSKLRSDKHFQQVRNESVVWFVFLPVAPVTTAGPAIPALAGVTIALGLLSALLLGHLLCFHIYLMWNRLSTYEYIVRQRHRQEAGDSRKPPPENDSGVPKLNLIKQQVSYSGTLGYTNPEMEVEDPKAMTSQEGAARYGNGRIRCSSEHMDEEEHLPSVLTEQKASPHPHKHAQKKKRKVRKLAAEVNGDISIDTSTAKGLQKTSAEKESSVAAATVSSSLGQRLPFPAFPLRASLPPLAPVQAAGPPAEYHSDSAESLEEIPVAMARLGSAALAGAQIPTTTATASSSYSSMLQCALPSSAAGHAAPSPQPRTKRKTAARTVSEQRFEMLYHNPSMFMTRESGEPAIPPEESPRAAKRKQTGKKRNTEDAKPSSRVGTSLA.

Residues 1 to 41 (MDVCSKNSNRTAPVSEGGIRRADVPLCSRTNGWSWPPHPFQ) are Cytoplasmic-facing. Residues 42 to 62 (FLAWLLYLYFAVTGFGVFVPL) traverse the membrane as a helical segment. Residues 63-71 (LPTHWIPAG) lie on the Lumenal side of the membrane. A helical membrane pass occupies residues 72-92 (YICTGITFVCHLFMHLMAVSI). Residues 93 to 174 (DPADYNVRAK…YWLFLNSVIS (82 aa)) are Cytoplasmic-facing. The DHHC domain maps to 121–173 (ENCHCYLCEVDVGPKSKHCSACNKCVASFDHHCRWLNNCVGSRNYWLFLNSVI). The S-palmitoyl cysteine intermediate role is filled by C153. A helical membrane pass occupies residues 175 to 195 (ALLGIVLVVVIASYVFIEFFL). Over 196–230 (DPSKLRSDKHFQQVRNESVVWFVFLPVAPVTTAGP) the chain is Lumenal. Residues 231–251 (AIPALAGVTIALGLLSALLLG) traverse the membrane as a helical segment. Topologically, residues 252 to 578 (HLLCFHIYLM…PSSRVGTSLA (327 aa)) are cytoplasmic. Positions 278–288 (QEAGDSRKPPP) are enriched in basic and acidic residues. Disordered regions lie at residues 278–298 (QEAG…PKLN), 345–376 (HMDE…KRKV), 497–517 (SAAG…TAAR), and 532–578 (SMFM…TSLA). Over residues 363 to 376 (PHPHKHAQKKKRKV) the composition is skewed to basic residues. The segment covering 552–561 (AAKRKQTGKK) has biased composition (basic residues).

Belongs to the DHHC palmitoyltransferase family.

The protein resides in the endosome membrane. It is found in the endoplasmic reticulum membrane. It localises to the golgi apparatus. The catalysed reaction is L-cysteinyl-[protein] + hexadecanoyl-CoA = S-hexadecanoyl-L-cysteinyl-[protein] + CoA. Functionally, palmitoyltransferase that catalyzes the addition of palmitate onto various protein substrates, such as ncdn and nlrp3. This is Palmitoyltransferase ZDHHC1 from Danio rerio (Zebrafish).